The following is a 474-amino-acid chain: 3-isopropylmalate dehydratase large subunit (474 aa).

[4Fe-4S] cluster contacts are provided by cysteine 353, cysteine 413, and cysteine 416.

Belongs to the aconitase/IPM isomerase family. LeuC type 1 subfamily. Heterodimer of LeuC and LeuD. It depends on [4Fe-4S] cluster as a cofactor.

The catalysed reaction is (2R,3S)-3-isopropylmalate = (2S)-2-isopropylmalate. It participates in amino-acid biosynthesis; L-leucine biosynthesis; L-leucine from 3-methyl-2-oxobutanoate: step 2/4. Its function is as follows. Catalyzes the isomerization between 2-isopropylmalate and 3-isopropylmalate, via the formation of 2-isopropylmaleate. This Roseiflexus sp. (strain RS-1) protein is 3-isopropylmalate dehydratase large subunit.